The sequence spans 439 residues: Xaa-Pro dipeptidase (439 aa).

Residues Asp-244, Asp-255, His-335, Glu-380, and Glu-419 each coordinate Mn(2+).

The protein belongs to the peptidase M24B family. Bacterial-type prolidase subfamily. Mn(2+) is required as a cofactor.

The enzyme catalyses Xaa-L-Pro dipeptide + H2O = an L-alpha-amino acid + L-proline. In terms of biological role, splits dipeptides with a prolyl residue in the C-terminal position. This Shewanella oneidensis (strain ATCC 700550 / JCM 31522 / CIP 106686 / LMG 19005 / NCIMB 14063 / MR-1) protein is Xaa-Pro dipeptidase.